The sequence spans 405 residues: Acetate kinase (405 aa).

Asparagine 7 contacts Mg(2+). Position 14 (lysine 14) interacts with ATP. Residue arginine 90 participates in substrate binding. The Proton donor/acceptor role is filled by aspartate 147. ATP is bound by residues 207 to 211 (HLGNG), 282 to 284 (DMR), and 330 to 334 (GVGEN). Glutamate 383 contacts Mg(2+).

Belongs to the acetokinase family. As to quaternary structure, homodimer. Requires Mg(2+) as cofactor. The cofactor is Mn(2+).

It is found in the cytoplasm. The enzyme catalyses acetate + ATP = acetyl phosphate + ADP. It participates in metabolic intermediate biosynthesis; acetyl-CoA biosynthesis; acetyl-CoA from acetate: step 1/2. Functionally, catalyzes the formation of acetyl phosphate from acetate and ATP. Can also catalyze the reverse reaction. The protein is Acetate kinase of Pseudothermotoga lettingae (strain ATCC BAA-301 / DSM 14385 / NBRC 107922 / TMO) (Thermotoga lettingae).